A 230-amino-acid polypeptide reads, in one-letter code: MEEERLLEELESKLGIEFQNINLLVTALTHSSYANENKNAEYNERLEFLGDAVLQLSISEYFFKKYPTISEGELTKKRALVVCGMSLHSIGERWQLGKYIRMSHGEELTGGRTRVSIIADCVEAVIAAIYLDKGFDTAKNFILREFEGTIQNAVENKIILDYKTRLQEILQSKGKTDIKYTLVRHEGPPHRRKFFVNLNFDNDVKSTGEGYTKKDAEQDAACKALKGLDN.

The RNase III domain occupies 7–134 (LEELESKLGI…VIAAIYLDKG (128 aa)). Glu-47 lines the Mg(2+) pocket. The active site involves Asp-51. Mg(2+) contacts are provided by Asp-120 and Glu-123. The active site involves Glu-123. In terms of domain architecture, DRBM spans 161–230 (DYKTRLQEIL…ACKALKGLDN (70 aa)).

This sequence belongs to the ribonuclease III family. As to quaternary structure, homodimer. The cofactor is Mg(2+).

It localises to the cytoplasm. It catalyses the reaction Endonucleolytic cleavage to 5'-phosphomonoester.. Digests double-stranded RNA. Involved in the processing of primary rRNA transcript to yield the immediate precursors to the large and small rRNAs (23S and 16S). Processes some mRNAs, and tRNAs when they are encoded in the rRNA operon. Processes pre-crRNA and tracrRNA of type II CRISPR loci if present in the organism. In Clostridium acetobutylicum (strain ATCC 824 / DSM 792 / JCM 1419 / IAM 19013 / LMG 5710 / NBRC 13948 / NRRL B-527 / VKM B-1787 / 2291 / W), this protein is Ribonuclease 3.